The sequence spans 147 residues: Protein-export protein SecB 2 (147 aa).

It belongs to the SecB family. Homotetramer, a dimer of dimers. One homotetramer interacts with 1 SecA dimer.

It is found in the cytoplasm. One of the proteins required for the normal export of preproteins out of the cell cytoplasm. It is a molecular chaperone that binds to a subset of precursor proteins, maintaining them in a translocation-competent state. It also specifically binds to its receptor SecA. The polypeptide is Protein-export protein SecB 2 (Francisella tularensis subsp. novicida (strain U112)).